A 417-amino-acid chain; its full sequence is Serine hydroxymethyltransferase (417 aa).

Residues Leu-121 and 125–127 (GHL) each bind (6S)-5,6,7,8-tetrahydrofolate. Lys-229 is modified (N6-(pyridoxal phosphate)lysine). 355 to 357 (SPF) is a (6S)-5,6,7,8-tetrahydrofolate binding site.

Belongs to the SHMT family. Homodimer. Requires pyridoxal 5'-phosphate as cofactor.

It localises to the cytoplasm. It carries out the reaction (6R)-5,10-methylene-5,6,7,8-tetrahydrofolate + glycine + H2O = (6S)-5,6,7,8-tetrahydrofolate + L-serine. The protein operates within one-carbon metabolism; tetrahydrofolate interconversion. Its pathway is amino-acid biosynthesis; glycine biosynthesis; glycine from L-serine: step 1/1. Its function is as follows. Catalyzes the reversible interconversion of serine and glycine with tetrahydrofolate (THF) serving as the one-carbon carrier. This reaction serves as the major source of one-carbon groups required for the biosynthesis of purines, thymidylate, methionine, and other important biomolecules. Also exhibits THF-independent aldolase activity toward beta-hydroxyamino acids, producing glycine and aldehydes, via a retro-aldol mechanism. The chain is Serine hydroxymethyltransferase from Shewanella putrefaciens (strain CN-32 / ATCC BAA-453).